We begin with the raw amino-acid sequence, 572 residues long: MRTSQYLLSTLKETPADAEVISHQLMLRAGMIRKLASGLYTWLPTGVRVLKKVENIVREEMNNAGAIEVLMPVVQPSELWQESGRWEQYGPELLRIADRGDRPFVLGPTHEEVITDLIRNELSSYKQLPLNFYQIQTKFRDEVRPRFGVMRSREFLMKDAYSFHTSQESLQETYDAMYAAYSKIFSRMGLDFRAVQADTGSIGGSASHEFQVLAQSGEDDVVFSDTSDYAANIELAEAIAPKEPRAAATQEMTLVDTPNAKTIAELVEQFNLPIEKTVKTLLVKAVEGSSFPLVALLVRGDHELNEVKAEKLPQVASPLTFATEEEIRAVVKAGPGSLGPVNMPIPVVIDRTVAAMSDFAAGANIDGKHYFGINWDRDVATPEIADIRNVVAGDPSPDGQGTLLIKRGIEVGHIFQLGTKYSEALKASVQGEDGRNQILTMGCYGIGVTRVVAAAIEQNYDERGIVWPDAIAPFQVAILPMNMHKSFRVQELAEKLYSELRAQGIEVLLDDRKERPGVMFADMELIGIPHTIVLGDRNLDNDDIEYKYRRNGEKQLIKTGDIVDYLVKQIKG.

Belongs to the class-II aminoacyl-tRNA synthetase family. ProS type 1 subfamily. As to quaternary structure, homodimer.

The protein localises to the cytoplasm. It catalyses the reaction tRNA(Pro) + L-proline + ATP = L-prolyl-tRNA(Pro) + AMP + diphosphate. In terms of biological role, catalyzes the attachment of proline to tRNA(Pro) in a two-step reaction: proline is first activated by ATP to form Pro-AMP and then transferred to the acceptor end of tRNA(Pro). As ProRS can inadvertently accommodate and process non-cognate amino acids such as alanine and cysteine, to avoid such errors it has two additional distinct editing activities against alanine. One activity is designated as 'pretransfer' editing and involves the tRNA(Pro)-independent hydrolysis of activated Ala-AMP. The other activity is designated 'posttransfer' editing and involves deacylation of mischarged Ala-tRNA(Pro). The misacylated Cys-tRNA(Pro) is not edited by ProRS. The polypeptide is Proline--tRNA ligase (Escherichia coli O127:H6 (strain E2348/69 / EPEC)).